The following is a 300-amino-acid chain: Dihydroorotate dehydrogenase B (NAD(+)), catalytic subunit (300 aa).

FMN is bound by residues Ser-21 and 45-46 (KS). Substrate contacts are provided by residues Lys-45, 69 to 73 (NAVGL), and Asn-125. Asn-125 contacts FMN. Cys-128 serves as the catalytic Nucleophile. Residues Lys-163 and Ile-187 each coordinate FMN. Position 188–189 (188–189 (NT)) interacts with substrate. FMN-binding positions include Gly-213, 239–240 (GG), and 261–262 (GT).

The protein belongs to the dihydroorotate dehydrogenase family. Type 1 subfamily. As to quaternary structure, heterotetramer of 2 PyrK and 2 PyrD type B subunits. FMN serves as cofactor.

The protein resides in the cytoplasm. It catalyses the reaction (S)-dihydroorotate + NAD(+) = orotate + NADH + H(+). It participates in pyrimidine metabolism; UMP biosynthesis via de novo pathway; orotate from (S)-dihydroorotate (NAD(+) route): step 1/1. Its function is as follows. Catalyzes the conversion of dihydroorotate to orotate with NAD(+) as electron acceptor. This is Dihydroorotate dehydrogenase B (NAD(+)), catalytic subunit (pyrD) from Thermoplasma acidophilum (strain ATCC 25905 / DSM 1728 / JCM 9062 / NBRC 15155 / AMRC-C165).